Here is a 90-residue protein sequence, read N- to C-terminus: Putative septation protein SpoVG (90 aa).

The protein belongs to the SpoVG family.

Its function is as follows. Could be involved in septation. This Clostridium perfringens (strain ATCC 13124 / DSM 756 / JCM 1290 / NCIMB 6125 / NCTC 8237 / Type A) protein is Putative septation protein SpoVG.